Reading from the N-terminus, the 343-residue chain is Aspartate-semialdehyde dehydrogenase (343 aa).

NADP(+)-binding positions include 20–23 and 48–49; these read SGAV and RS. Arginine 108 serves as a coordination point for phosphate. Cysteine 137 (acyl-thioester intermediate) is an active-site residue. Glutamine 164 serves as a coordination point for substrate. 167-168 serves as a coordination point for NADP(+); the sequence is SG. A phosphate-binding site is contributed by lysine 221. Arginine 243 is a binding site for substrate. The active-site Proton acceptor is histidine 250. Glutamine 323 serves as a coordination point for NADP(+).

The protein belongs to the aspartate-semialdehyde dehydrogenase family. In terms of assembly, homodimer.

It carries out the reaction L-aspartate 4-semialdehyde + phosphate + NADP(+) = 4-phospho-L-aspartate + NADPH + H(+). It participates in amino-acid biosynthesis; L-lysine biosynthesis via DAP pathway; (S)-tetrahydrodipicolinate from L-aspartate: step 2/4. Its pathway is amino-acid biosynthesis; L-methionine biosynthesis via de novo pathway; L-homoserine from L-aspartate: step 2/3. It functions in the pathway amino-acid biosynthesis; L-threonine biosynthesis; L-threonine from L-aspartate: step 2/5. In terms of biological role, catalyzes the NADPH-dependent formation of L-aspartate-semialdehyde (L-ASA) by the reductive dephosphorylation of L-aspartyl-4-phosphate. In Prochlorococcus marinus (strain SARG / CCMP1375 / SS120), this protein is Aspartate-semialdehyde dehydrogenase.